A 186-amino-acid polypeptide reads, in one-letter code: Large ribosomal subunit protein eL18B (186 aa).

An N6,N6,N6-trimethyllysine modification is found at Lys50. A Glycyl lysine isopeptide (Lys-Gly) (interchain with G-Cter in ubiquitin) cross-link involves residue Lys116.

It belongs to the eukaryotic ribosomal protein eL18 family. As to quaternary structure, component of the large ribosomal subunit (LSU). Mature yeast ribosomes consist of a small (40S) and a large (60S) subunit. The 40S small subunit contains 1 molecule of ribosomal RNA (18S rRNA) and 33 different proteins (encoded by 57 genes). The large 60S subunit contains 3 rRNA molecules (25S, 5.8S and 5S rRNA) and 46 different proteins (encoded by 81 genes). eL18 interacts with NAP1.

It is found in the cytoplasm. In terms of biological role, component of the ribosome, a large ribonucleoprotein complex responsible for the synthesis of proteins in the cell. The small ribosomal subunit (SSU) binds messenger RNAs (mRNAs) and translates the encoded message by selecting cognate aminoacyl-transfer RNA (tRNA) molecules. The large subunit (LSU) contains the ribosomal catalytic site termed the peptidyl transferase center (PTC), which catalyzes the formation of peptide bonds, thereby polymerizing the amino acids delivered by tRNAs into a polypeptide chain. The nascent polypeptides leave the ribosome through a tunnel in the LSU and interact with protein factors that function in enzymatic processing, targeting, and the membrane insertion of nascent chains at the exit of the ribosomal tunnel. This Saccharomyces cerevisiae (strain ATCC 204508 / S288c) (Baker's yeast) protein is Large ribosomal subunit protein eL18B.